We begin with the raw amino-acid sequence, 431 residues long: Adenylosuccinate synthetase (431 aa).

GTP is bound by residues 12-18 (GDEGKGK) and 40-42 (GHT). The active-site Proton acceptor is the Asp-13. Residues Asp-13 and Gly-40 each coordinate Mg(2+). Residues 13–16 (DEGK), 38–41 (NAGH), Thr-129, Arg-143, Gln-224, and Thr-239 each bind IMP. The Proton donor role is filled by His-41. Residue Lys-292 forms an Isoglutamyl lysine isopeptide (Lys-Gln) (interchain with Q-Cter in protein Pup) linkage. 299 to 305 (VTTGRAR) contacts substrate. Residue Arg-303 coordinates IMP. Residues Arg-305, 331–333 (KLD), and 413–415 (GVG) each bind GTP.

It belongs to the adenylosuccinate synthetase family. In terms of assembly, homodimer. Mg(2+) is required as a cofactor.

The protein localises to the cytoplasm. It catalyses the reaction IMP + L-aspartate + GTP = N(6)-(1,2-dicarboxyethyl)-AMP + GDP + phosphate + 2 H(+). It participates in purine metabolism; AMP biosynthesis via de novo pathway; AMP from IMP: step 1/2. Plays an important role in the de novo pathway of purine nucleotide biosynthesis. Catalyzes the first committed step in the biosynthesis of AMP from IMP. The sequence is that of Adenylosuccinate synthetase from Mycolicibacterium smegmatis (strain ATCC 700084 / mc(2)155) (Mycobacterium smegmatis).